The primary structure comprises 266 residues: Short-chain dehydrogenase/reductase AacuF (266 aa).

Leu13, Asp57, and Asn85 together coordinate NADP(+). Residues Ser145 and Tyr164 each act as proton donor in the active site. The NADP(+) site is built by Tyr164, Lys168, and Val198. The Lowers pKa of active site Tyr role is filled by Lys168.

The protein belongs to the short-chain dehydrogenases/reductases (SDR) family.

The protein operates within secondary metabolite biosynthesis. Short-chain dehydrogenase/reductase; part of the gene cluster that mediates the biosynthesis of the tetrahydroxanthone dimer secalonic acid D. The pathway begins with the synthesis of atrochrysone thioester by the polyketide synthase AacuL. The atrochrysone carboxyl ACP thioesterase AacuM then breaks the thioester bond and releases the atrochrysone carboxylic acid from AacuL. Atrochrysone carboxylic acid is decarboxylated by the decarboxylase AacuI, and oxidized by the anthrone oxygenase AacuG to yield emodin. Emodin is then reduced to emodin hydroquinone by a yet unidentified oxidoreductase. A-ring reduction by the short chain dehydrogenase AacuN, dehydration by the scytalone dehydratase-like protein AacuK and probable spontaneous re-oxidation, results in overall deoxygenation to chrysophanol. Baeyer-Villiger oxidation by the Baeyer-Villiger monooxygenase (BVMO) AacuH then yields monodictyphenone. Monodictyphenone is transformed into compounds with the tetrahydroxanthone skeleton via methylesterification by the methyltransferase AacuQ, followed by the action of the flavin-dependent monooxygenase AacuC, the isomerase AacuP, and the short chain dehydrogenase/reductase AacuF or AacuD. AacuF and AacuD should accept the same compound as a substrate but perform the ketoreduction with a different stereoselectivity, thus yielding blennolides B and A, respectively. In the final step of the biosynthesis, the cytochrome P450 monooxygenase AacuE accepts blennolide B and/or blennolide A to conduct the dimerization reaction to furnish the tetrahydroxanthone dimers, secalonic acids D, B, and F. This chain is Short-chain dehydrogenase/reductase AacuF, found in Aspergillus aculeatus (strain ATCC 16872 / CBS 172.66 / WB 5094).